The chain runs to 342 residues: Anthranilate phosphoribosyltransferase (342 aa).

5-phospho-alpha-D-ribose 1-diphosphate is bound by residues Gly-81, Gly-84 to Asp-85, Thr-89, Asn-91 to Thr-94, Lys-109 to Ser-117, and Ala-121. Residue Gly-81 participates in anthranilate binding. Ser-93 lines the Mg(2+) pocket. Asn-112 provides a ligand contact to anthranilate. Residue Arg-167 participates in anthranilate binding. Mg(2+) is bound by residues Asp-226 and Glu-227.

It belongs to the anthranilate phosphoribosyltransferase family. Homodimer. It depends on Mg(2+) as a cofactor.

It catalyses the reaction N-(5-phospho-beta-D-ribosyl)anthranilate + diphosphate = 5-phospho-alpha-D-ribose 1-diphosphate + anthranilate. It functions in the pathway amino-acid biosynthesis; L-tryptophan biosynthesis; L-tryptophan from chorismate: step 2/5. Its function is as follows. Catalyzes the transfer of the phosphoribosyl group of 5-phosphorylribose-1-pyrophosphate (PRPP) to anthranilate to yield N-(5'-phosphoribosyl)-anthranilate (PRA). The chain is Anthranilate phosphoribosyltransferase from Beijerinckia indica subsp. indica (strain ATCC 9039 / DSM 1715 / NCIMB 8712).